The chain runs to 1825 residues: MKKEQAEILGFVPQKEIVYNKLLPYADQLDRESNDILAQIKGNLGRAVQLRELWPGVLFWTRKLSTYLRLYGRKFSKEDHVLFIKLLYELVTIPKLEISMMQSFARLLVNLLKKKELLSRDDLELPWRPLYDLYESILYSKTEHLGLNWFPNSVENVLKTLVKSCRVPESATQEMLDEWRPLLCPFDVTMQKAIGYFELFLPTIMPPEQHDKGFKLWFDEMMNLWVSVQNLPAWEGNLVNLFARLANDNIGYVNWDPYIPKIFTRILRSFNLPVGTSQMVVPRYLTNSYDIGHVVLWISSMLGGPQNQSQKQLNGLFSSIASFYHPSNNGRWLMKLMKLLQRLPASIVRRLHRERYKKPCWITPVPSTHKLTDQDVTDFVESMKQPVLMAMFSKTGSMDAAQALQNLALMRPELVIPPVLEKTYPAMETLTEPHQLTATLSCMIGMARSLLSGGRHYPEGPAHVLPLLMRALPGVDPNDFSKCMITFQFIATFTTLVPLVDCSSALHDKNDLTEMERELCSASAEFEDFVLQFMDRCFALIDSSTLEQTREETETEKMTHLESLVELGLSSTFSTILTQCSMEIFKVALEKVFNFATTNIFETRVAGRMVADMCRAASKCHPAESLRLFVPHCCNAITHLTANEDVSNEEELDKELLWNLQLLSEVTRVDGEKLLPYRTQLVQILQLTLRLRCKQGYSLACNLLHHVLRSTALIYPTDYCSVPGGFSRPLQEYLPIKDWGRPGDLWNLEIQWHVPSTEETAFVFYVLDLLLQPELQRLQRYAQGEQEMSRDDVLQSLCIVQHCLLGAGSMLPPLDGSTVTGLVPSMVNLEETKLYIGVDYDQSRENYREAVCKVMRQLLHYILEHSEDDTKSLFAIIKIISDLMHFKGSHKHEFDSRWKSFTLVKKSMENRLHGKKQHIRALLIDRVLLQHEMRKLLVEGCEYKTVHQDLLRDLLRLSTSTYSQVRSKAQNVLFTALGTYNFCCRDITPRVLEFLEPTRTDVTQQQFKGALYCLLGNHCGVCLANLHDWDCIAQTWPAIVRSGLSSAMSLEKPSIVRLFDDLADKVHRQYETIGIDFTVPENAVFLGRSITNSSQPTPHMGTPEDQELQQGLAVQQAKNREAEQKYEKLVKDLLECLDDRDLPWKFEHIAIGFLSLLLRDDYPLPAPAVFFFVQSLNHDALVVRKMAIAAVAGILKQLKRPRKKIPVNPCDISGVTEPEELEAGDRPGNDWLQYHSESLPNSQQDWDAFCFVEKTHWGYYSWPKKLMVYAPAAEQPKDLAPDTMSEREAIINDHFTDPTFINQLIKFLSLEDRKGKDKFNPRRFCLFKGLFRNYSDAFLPVLKPHMERLANDSHESTQRCVAEIIAGLIRGSKHWSFGKVEALWAFLIPLMRTALSNITVETYADWGTCVATACESRDPRKLHWLLEMLMECPLSGEGGSFVDACHLYVLQGGLAQQEWRVPELLHRLLSYLEPKLTQVYKNVRERIGSVLTYIFMIDVALPYTLPTKSPHIAEFTERILSQLKPLIEGDEEIQNHVVEENGVGEQDERTQAIKLLKTVLKWLMASAGRSFSTPVPQQLQLLPLLFKIAPVENDDSYDELKRDAKTCLSLMSQGLLYPEQIPMVLAVLHEIAGSSSWHARYSVLTYLQTMVFYNLFTILSSEQCVQGVRALVIRLLEDEQLEVREMAATTLSGFLQCNFLAMDSSMQTHFEALCKTRLPKKRKRDVGSVMDTIPSVDLVRRHAGVLGLSACILSSPYDVPTWMPQLLMDLSAHLNDTQPIEMTVKKTLSNFRRTHHDNWLEHKQQFTDDQLVVLTDLLVSPCYYA.

HEAT repeat units lie at residues 458-502 (PEGP…LVDC), 981-1020 (NFCCRDITPRVLEFLEPTRTDVTQQQFKGALYCLLGNHCG), 1162-1200 (YPLPAPAVFFFVQSLNHDALVVRKMAIAAVAGILKQLKR), 1336-1374 (DAFLPVLKPHMERLANDSHESTQRCVAEIIAGLIRGSKH), 1618-1656 (PEQIPMVLAVLHEIAGSSSWHARYSVLTYLQTMVFYNLF), and 1662-1700 (EQCVQGVRALVIRLLEDEQLEVREMAATTLSGFLQCNFL). The bromodomain-like (BRDL) stretch occupies residues 1632–1720 (AGSSSWHARY…EALCKTRLPK (89 aa)).

Belongs to the BLM10 family. In terms of assembly, homodimer. Interacts with the 20S and 26S proteasomes.

The protein resides in the cytoplasm. The protein localises to the cytosol. Its subcellular location is the nucleus. It is found in the nucleus speckle. Its function is as follows. Associated component of the proteasome that specifically recognizes acetylated histones and promotes ATP- and ubiquitin-independent degradation of core histones during DNA damage response. Recognizes and binds acetylated histones via its bromodomain-like (BRDL) region and activates the proteasome by opening the gated channel for substrate entry. Binds to the core proteasome via its C-terminus, which occupies the same binding sites as the proteasomal ATPases, opening the closed structure of the proteasome via an active gating mechanism. involved in DNA damage response in somatic cells: binds to acetylated histones and promotes degradation of histones. The sequence is that of Proteasome activator complex subunit 4B (psme4b) from Danio rerio (Zebrafish).